Reading from the N-terminus, the 210-residue chain is Flagellar transcriptional regulator FlhC (210 aa).

Zn(2+) is bound by residues cysteine 144, cysteine 147, cysteine 164, and cysteine 167.

The protein belongs to the FlhC family. In terms of assembly, heterohexamer composed of two FlhC and four FlhD subunits. Each FlhC binds a FlhD dimer, forming a heterotrimer, and a hexamer assembles by dimerization of two heterotrimers. Zn(2+) serves as cofactor.

Its subcellular location is the cytoplasm. In terms of biological role, functions in complex with FlhD as a master transcriptional regulator that regulates transcription of several flagellar and non-flagellar operons by binding to their promoter region. Activates expression of class 2 flagellar genes, including fliA, which is a flagellum-specific sigma factor that turns on the class 3 genes. Also regulates genes whose products function in a variety of physiological pathways. The chain is Flagellar transcriptional regulator FlhC from Cupriavidus pinatubonensis (strain JMP 134 / LMG 1197) (Cupriavidus necator (strain JMP 134)).